The following is a 209-amino-acid chain: Small ribosomal subunit protein mS23 (209 aa).

It belongs to the mitochondrion-specific ribosomal protein mS23 family. Component of the mitochondrial small ribosomal subunit.

It localises to the mitochondrion. The polypeptide is Small ribosomal subunit protein mS23 (rsm25) (Sclerotinia sclerotiorum (strain ATCC 18683 / 1980 / Ss-1) (White mold)).